A 153-amino-acid polypeptide reads, in one-letter code: RNA-binding protein OPG065 (153 aa).

Positions 1–33 constitute a Z-binding domain; sequence MEKREVNKALYDLQRSAMVYSSNDTPPRWSTTM. Polar residues predominate over residues 22–34; sequence SNDTPPRWSTTMD. A disordered region spans residues 22-44; the sequence is SNDTPPRWSTTMDADTRPTDSDA. The DRBM domain occupies 80–147; that stretch reads NPVTVINEYC…AKLAVDKLLS (68 aa).

The protein belongs to the orthopoxvirus OPG065 family. In terms of assembly, interacts with host G1P2/ISG15. Interacts with host EIF2AK2/PKR. Interacts with host ZBP1.

In terms of biological role, RNA-binding protein that plays a role in the inhibition of multiple cellular antiviral responses activated by double-stranded RNA (dsRNA), such as inhibition of PKR activation, necroptosis, and IFN-mediated antiviral activities. Recognizes and binds Z-RNA structures via its Z-binding domain and dsRNA via its DRBM domain: RNA-binding activity is required to escape host ZBP1-dependent necroptosis. Mechanistically, the Z-binding domain binds Z-RNAs that are produced during vaccinia virus infection, thereby competing with Z-RNA detection by host ZBP1, suppressing ZBP1-dependent necroptosis. Acts as a key inhibitor of the interferon response by blocking the phosphorylation and subsequent activation of IRF3 and IRF7 kinases that are required for interferon-alpha gene expression. Inhibits NF-kappa-B activation and the ubiquitin-like protein ISG15, which is an early antiviral protein. The binding with host ISG15 subsequently blocks host ISGylation. The protein is RNA-binding protein OPG065 (OPG065) of Monkeypox virus.